Consider the following 90-residue polypeptide: DNA-directed RNA polymerase subunit omega (90 aa).

The segment at 69–90 (RQEQQEQEAAELAAVSSIAHNR) is disordered.

Belongs to the RNA polymerase subunit omega family. In terms of assembly, the RNAP catalytic core consists of 2 alpha, 1 beta, 1 beta' and 1 omega subunit. When a sigma factor is associated with the core the holoenzyme is formed, which can initiate transcription.

It catalyses the reaction RNA(n) + a ribonucleoside 5'-triphosphate = RNA(n+1) + diphosphate. In terms of biological role, promotes RNA polymerase assembly. Latches the N- and C-terminal regions of the beta' subunit thereby facilitating its interaction with the beta and alpha subunits. The protein is DNA-directed RNA polymerase subunit omega of Vibrio parahaemolyticus serotype O3:K6 (strain RIMD 2210633).